Here is a 157-residue protein sequence, read N- to C-terminus: Glucosamine 6-phosphate N-acetyltransferase 1 (157 aa).

The region spanning 9 to 157 is the N-acetyltransferase domain; sequence ISFRPLDIDD…SIYLPTPPKL (149 aa). Substrate-binding positions include Thr31, 78–81, and 90–92; these read KFIR and EDI. 100–105 contributes to the acetyl-CoA binding site; the sequence is GKNLGL. Residue 121–122 coordinates substrate; that stretch reads YK. Acetyl-CoA is bound at residue 135 to 137; it reads YEK.

It belongs to the acetyltransferase family. GNA1 subfamily.

It carries out the reaction D-glucosamine 6-phosphate + acetyl-CoA = N-acetyl-D-glucosamine 6-phosphate + CoA + H(+). It participates in nucleotide-sugar biosynthesis; UDP-N-acetyl-alpha-D-glucosamine biosynthesis; N-acetyl-alpha-D-glucosamine 1-phosphate from alpha-D-glucosamine 6-phosphate (route I): step 1/2. The chain is Glucosamine 6-phosphate N-acetyltransferase 1 (gna1) from Dictyostelium discoideum (Social amoeba).